We begin with the raw amino-acid sequence, 337 residues long: MSIARRTTLSKFLIEQQRETNNLPADLRLLIEVVARACKAISYNVSKGALGDALGTAGSENVQGEVQKKLDILSNEILLDANEWGGNLAAMASEEMETFFPIPANYPRGEYLLVFDPLDGSSNIDVNVSIGTIFSVLRCPHGKQATEESFLQPGTEQVAAGYAVYGPQSVFVLTTGNGVNCFTLDREVGSWVLTQSNMQIPADTREYAINASNARHWYEPVQRYVSELNAGKEGPRGDNFNMRWIASMVADVHRILNRGGIFMYPADKRTPDRPGKLRLMYEANPMSFIVEQAGGAATTGTQRIMEVQPTGLHQRVPVFLGSKNEVERVTAYHNEGK.

Mg(2+) contacts are provided by Glu-94, Asp-116, Leu-118, and Asp-119. Substrate-binding positions include 119 to 122 (DGSS), Asn-210, and Lys-276. Mg(2+) is bound at residue Glu-282.

The protein belongs to the FBPase class 1 family. As to quaternary structure, homotetramer. Requires Mg(2+) as cofactor.

The protein resides in the cytoplasm. It carries out the reaction beta-D-fructose 1,6-bisphosphate + H2O = beta-D-fructose 6-phosphate + phosphate. It functions in the pathway carbohydrate biosynthesis; gluconeogenesis. This Burkholderia vietnamiensis (strain G4 / LMG 22486) (Burkholderia cepacia (strain R1808)) protein is Fructose-1,6-bisphosphatase class 1.